The chain runs to 278 residues: MENAANYTRRILKGGAKAHKSLGQNFLMDDRVIEAIAAASIKDPEIPVVEIGPGLGVLTRVLAQKAQKVWAVELDRGKVNLLQRELQGLPVDILNMDALKLDLKDIWGTGKGVLVGNLPYYITSPLLMHFLEQKDSLASMVVMVQKEVADRLVAKPGGKDYGILSIAAQVSAQGEKLFEVPPQAFWPAPKVTSAVVRFELRSYPGFRVKEKDFFRVVKAAFSQRRKTLGNSLAGGLGLPKQQIGEILAAAGVDEQRRAETLSIDEFQAVTEAVMKNLD.

S-adenosyl-L-methionine is bound by residues Asn-25, Leu-27, Gly-52, Glu-73, Asp-97, and Asn-117.

Belongs to the class I-like SAM-binding methyltransferase superfamily. rRNA adenine N(6)-methyltransferase family. RsmA subfamily.

Its subcellular location is the cytoplasm. The enzyme catalyses adenosine(1518)/adenosine(1519) in 16S rRNA + 4 S-adenosyl-L-methionine = N(6)-dimethyladenosine(1518)/N(6)-dimethyladenosine(1519) in 16S rRNA + 4 S-adenosyl-L-homocysteine + 4 H(+). Specifically dimethylates two adjacent adenosines (A1518 and A1519) in the loop of a conserved hairpin near the 3'-end of 16S rRNA in the 30S particle. May play a critical role in biogenesis of 30S subunits. The polypeptide is Ribosomal RNA small subunit methyltransferase A (Desulfitobacterium hafniense (strain DSM 10664 / DCB-2)).